The primary structure comprises 547 residues: Alpha-1,3-mannosyl-glycoprotein 4-beta-N-acetylglucosaminyltransferase B (547 aa).

Residues 1 to 7 (MRLRNGT) are Cytoplasmic-facing. A helical; Signal-anchor for type II membrane protein membrane pass occupies residues 8-28 (FLTVLLFGLCGLISLSWYTAF). Residues 29 to 547 (SNSKGNVVDI…LSEIFIKKAE (519 aa)) lie on the Lumenal side of the membrane. Positions 36-83 (VDIYQREFLALRDRLHSAEQENLKRSKELNLVLDEIKRAIAEKQALRD) form a coiled coil. N-linked (GlcNAc...) asparagine glycosylation is found at N85, N101, and N464.

This sequence belongs to the glycosyltransferase 54 family. A divalent metal cation serves as cofactor. In terms of processing, N-glycosylated.

The protein localises to the golgi apparatus membrane. It catalyses the reaction N(4)-{beta-D-GlcNAc-(1-&gt;2)-alpha-D-Man-(1-&gt;3)-[beta-D-GlcNAc-(1-&gt;2)-alpha-D-Man-(1-&gt;6)]-beta-D-Man-(1-&gt;4)-beta-D-GlcNAc-(1-&gt;4)-beta-D-GlcNAc}-L-asparaginyl-[protein] + UDP-N-acetyl-alpha-D-glucosamine = N(4)-{beta-D-GlcNAc-(1-&gt;2)-[beta-D-GlcNAc-(1-&gt;4)]-alpha-D-Man-(1-&gt;3)-[beta-D-GlcNAc-(1-&gt;2)-alpha-D-Man-(1-&gt;6)]-beta-D-Man-(1-&gt;4)-beta-D-GlcNAc-(1-&gt;4)-beta-D-GlcNAc}-L-asparaginyl-[protein] + UDP + H(+). The catalysed reaction is an N(4)-{beta-D-GlcNAc-(1-&gt;2)-alpha-D-Man-(1-&gt;3)-[alpha-D-Man-(1-&gt;6)]-beta-D-Man-(1-&gt;4)-beta-D-GlcNAc-(1-&gt;4)-beta-D-GlcNAc}-L-asparaginyl-[protein] + UDP-N-acetyl-alpha-D-glucosamine = an N(4)-{beta-D-GlcNAc-(1-&gt;2)-[beta-D-GlcNAc-(1-&gt;4)]-alpha-D-Man-(1-&gt;3)-[alpha-D-Man-(1-&gt;6)]-beta-D-Man-(1-&gt;4)-beta-D-GlcNAc-(1-&gt;4)-beta-D-GlcNAc}-L-asparaginyl-[protein] + UDP + H(+). It carries out the reaction an N(4)-{beta-D-GlcNAc-(1-&gt;2)-alpha-D-Man-(1-&gt;3)-[beta-D-GlcNAc-(1-&gt;2)-[beta-D-GlcNAc-(1-&gt;6)]-alpha-D-Man-(1-&gt;6)]-beta-D-Man-(1-&gt;4)-beta-D-GlcNAc-(1-&gt;4)-beta-D-GlcNAc}-L-asparaginyl-[protein] + UDP-N-acetyl-alpha-D-glucosamine = an N(4)-{beta-D-GlcNAc-(1-&gt;2)-[beta-D-GlcNAc-(1-&gt;4)]-alpha-D-Man-(1-&gt;3)-[beta-D-GlcNAc-(1-&gt;2)-[beta-D-GlcNAc-(1-&gt;6)]-alpha-D-Man-(1-&gt;6)]-beta-D-Man-(1-&gt;4)-beta-D-GlcNAc-(1-&gt;4)-beta-D-GlcNAc}-L-asparaginyl-[protein] + UDP + H(+). The enzyme catalyses an N(4)-{beta-D-GlcNAc-(1-&gt;2)-alpha-D-Man-(1-&gt;3)-[beta-D-GlcNAc-(1-&gt;2)-alpha-D-Man-(1-&gt;6)]-beta-D-Man-(1-&gt;4)-beta-D-GlcNAc-(1-&gt;4)-[alpha-L-Fuc-(1-&gt;6)]-beta-D-GlcNAc}-L-asparaginyl-[protein] + UDP-N-acetyl-alpha-D-glucosamine = N(4)-{beta-D-GlcNAc-(1-&gt;2)-[beta-D-GlcNAc-(1-&gt;4)]-alpha-D-Man-(1-&gt;3)-[beta-D-GlcNAc-(1-&gt;2)-alpha-D-Man-(1-&gt;6)]-beta-D-Man-(1-&gt;4)-beta-D-GlcNAc-(1-&gt;4)-[alpha-L-Fuc-(1-&gt;6)]-beta-D-GlcNAc}-asparaginyl-[protein] + UDP + H(+). It catalyses the reaction an N(4)-{beta-D-GlcNAc-(1-&gt;2)-alpha-D-Man-(1-&gt;3)-[beta-D-Gal-(1-&gt;4)-beta-D-GlcNAc-(1-&gt;2)-alpha-D-Man-(1-&gt;6)]-beta-D-Man-(1-&gt;4)-beta-D-GlcNAc-(1-&gt;4)-beta-D-GlcNAc}-L-asparaginyl-[protein] + UDP-N-acetyl-alpha-D-glucosamine = an N(4)-{beta-D-GlcNAc-(1-&gt;2)-[beta-D-GlcNAc-(1-&gt;4)]-alpha-D-Man-(1-&gt;3)-[beta-D-Gal-(1-&gt;4)-beta-D-GlcNAc-(1-&gt;2)-alpha-D-Man-(1-&gt;6)]-beta-D-Man-(1-&gt;4)-beta-D-GlcNAc-(1-&gt;4)-beta-D-GlcNAc}-L-asparaginyl-[protein] + UDP + H(+). The catalysed reaction is N(4)-{beta-D-GlcNAc-(1-&gt;2)-alpha-D-Man-(1-&gt;3)-[alpha-D-Man-(1-&gt;3)-{alpha-D-Man-(1-&gt;6)}-alpha-D-Man-(1-&gt;6)]-beta-D-Man-(1-&gt;4)-beta-D-GlcNAc-(1-&gt;4)-beta-D-GlcNAc}-asparaginyl-[protein] + UDP-N-acetyl-alpha-D-glucosamine = N(4)-{beta-D-GlcNAc-(1-&gt;2)-[beta-D-GlcNAc-(1-&gt;4)]-alpha-D-Man-(1-&gt;3)-[alpha-D-Man-(1-&gt;3)-{alpha-D-Man-(1-&gt;6)}-alpha-D-Man-(1-&gt;6)]-beta-D-Man-(1-&gt;4)-beta-D-GlcNAc-(1-&gt;4)-beta-D-GlcNAc}-asparaginyl-[protein] + UDP + H(+). It carries out the reaction N(4)-{beta-D-GlcNAc-(1-&gt;2)-alpha-D-Man-(1-&gt;3)-beta-D-Man-(1-&gt;4)-beta-D-GlcNAc-(1-&gt;4)-beta-D-GlcNAc}-asparaginyl-[protein] + UDP-N-acetyl-alpha-D-glucosamine = N(4)-{beta-D-GlcNAc-(1-&gt;2)-[beta-D-GlcNAc-(1-&gt;4)]-alpha-D-Man-(1-&gt;3)-beta-D-Man-(1-&gt;4)-beta-D-GlcNAc-(1-&gt;4)-beta-D-GlcNAc}-asparaginyl-[protein] + UDP + H(+). It participates in protein modification; protein glycosylation. Its function is as follows. Glycosyltransferase that catalyze the transfer of GlcNAc from UDP-GlcNAc to the GlcNAcbeta1-2Manalpha1-3 arm of the core structure of N-linked glycans through a beta1-4 linkage and participates in the production of tri- and tetra-antennary N-linked sugar chains. Prefers complex-type N-glycans over hybrid-types. Has lower affinities for donors or acceptors than MGAT4A, suggesting that, under physiological conditions, it is not the main contributor in N-glycan biosynthesis. The polypeptide is Alpha-1,3-mannosyl-glycoprotein 4-beta-N-acetylglucosaminyltransferase B (mgat4bQ9UQ53) (Danio rerio (Zebrafish)).